The sequence spans 169 residues: MAALLLRHVGRHCLRAHLSPQLCIRNAVPLGTTAKEEMERFWNKNLGSNRPLSPHITIYRWSLPMAMSICHRGTGIALSAGVSLFGLSALLLPGNFESHLELVKSLCLGPTLIYTAKFGIVFPLMYHTWNGIRHLIWDLGKGLTIPQLTQSGVVVLILTVLSSVGLAAM.

The N-terminal 29 residues, 1 to 29 (MAALLLRHVGRHCLRAHLSPQLCIRNAVP), are a transit peptide targeting the mitochondrion. Residues 30-62 (LGTTAKEEMERFWNKNLGSNRPLSPHITIYRWS) lie on the Mitochondrial matrix side of the membrane. A helical transmembrane segment spans residues 63-92 (LPMAMSICHRGTGIALSAGVSLFGLSALLL). Residues 93–112 (PGNFESHLELVKSLCLGPTL) lie on the Mitochondrial intermembrane side of the membrane. The chain crosses the membrane as a helical span at residues 113-137 (IYTAKFGIVFPLMYHTWNGIRHLIW). Residue His-127 participates in heme b binding. Residues 138–144 (DLGKGLT) lie on the Mitochondrial matrix side of the membrane. The helical transmembrane segment at 145–166 (IPQLTQSGVVVLILTVLSSVGL) threads the bilayer. Topologically, residues 167–169 (AAM) are mitochondrial intermembrane.

This sequence belongs to the cytochrome b560 family. In terms of assembly, component of complex II composed of four subunits: the flavoprotein (FP) SDHA, iron-sulfur protein (IP) SDHB, and a cytochrome b560 composed of SDHC and SDHD. Heme b is required as a cofactor. As to expression, detected in heart muscle (at protein level).

Its subcellular location is the mitochondrion inner membrane. It participates in carbohydrate metabolism; tricarboxylic acid cycle. Functionally, membrane-anchoring subunit of succinate dehydrogenase (SDH) that is involved in complex II of the mitochondrial electron transport chain and is responsible for transferring electrons from succinate to ubiquinone (coenzyme Q). SDH also oxidizes malate to the non-canonical enol form of oxaloacetate, enol-oxaloacetate. Enol-oxaloacetate, which is a potent inhibitor of the succinate dehydrogenase activity, is further isomerized into keto-oxaloacetate. The chain is Succinate dehydrogenase cytochrome b560 subunit, mitochondrial (SDHC) from Sus scrofa (Pig).